A 327-amino-acid polypeptide reads, in one-letter code: 3' cyclic ADP-D-ribose synthase AaTIR (327 aa).

Positions 10–120 are TIR domain; it reads VALSFAGENR…GILKTIGYIN (111 aa). K229 is a catalytic residue.

In terms of assembly, homodimer.

It catalyses the reaction NADP(+) + H2O = ADP-D-ribose 2'-phosphate + nicotinamide + H(+). It carries out the reaction NAD(+) = 3'cADPR + nicotinamide + H(+). In terms of biological role, NAD(+) hydrolase (NADase) that generates 3'cADPR, a cyclization variant of cyclic ADP-D-ribose (also called v2-cADPR). Also cleaves NADP(+), but does not cyclize the product. This Aquimarina amphilecti protein is 3' cyclic ADP-D-ribose synthase AaTIR.